The following is a 136-amino-acid chain: Large ribosomal subunit protein uL16 (136 aa).

The protein belongs to the universal ribosomal protein uL16 family. In terms of assembly, part of the 50S ribosomal subunit.

Binds 23S rRNA and is also seen to make contacts with the A and possibly P site tRNAs. In Ehrlichia chaffeensis (strain ATCC CRL-10679 / Arkansas), this protein is Large ribosomal subunit protein uL16.